The sequence spans 509 residues: Coiled-coil domain-containing protein 181 (509 aa).

The segment covering 58 to 82 has biased composition (basic and acidic residues); it reads VIEHTKQHSDPDKSLQDEVSPRKND. Disordered regions lie at residues 58 to 120, 241 to 332, and 345 to 367; these read VIEH…EEED, PINN…VTST, and QLEQ…EEKE. 2 stretches are compositionally biased toward polar residues: residues 243–266 and 300–332; these read NNAN…SVSG and TCPS…VTST. Residues 335–375 adopt a coiled-coil conformation; sequence LSPRQKELQKQLEQKREKLKREEERRKIEEEKEKKRENDIV.

The protein belongs to the CCDC181 family. In terms of assembly, homodimer. Interacts with HOOK1. Interacts with HOOK2. Interacts with HOOK3.

The protein resides in the cytoplasm. It localises to the cytoskeleton. It is found in the cell projection. The protein localises to the cilium. Its subcellular location is the flagellum. Its function is as follows. Microtubule-binding protein that localizes to the microtubular manchette of elongating spermatids. The polypeptide is Coiled-coil domain-containing protein 181 (Pongo abelii (Sumatran orangutan)).